The chain runs to 136 residues: Replication enhancer (136 aa).

It belongs to the geminiviridae replication enhancer protein family. Homooligomer. Interacts with the replication-associated protein (REP). Interacts with host proliferating cell nuclear antigen (PCNA). Interacts with host retinoblastoma-related protein 1 (RBR1), and may thereby deregulate the host cell cycle. Oligomerization and interaction with PCNA are necessary for optimal replication enhancement.

Increases viral DNA accumulation. Enhances infectivity and symptom expression. The protein is Replication enhancer of Beet curly top virus (strain California/Logan) (BCTV).